The sequence spans 307 residues: Bifunctional protein FolD (307 aa).

NADP(+) contacts are provided by residues 170-172, S195, and I236; that span reads GRS.

Belongs to the tetrahydrofolate dehydrogenase/cyclohydrolase family. Homodimer.

The catalysed reaction is (6R)-5,10-methylene-5,6,7,8-tetrahydrofolate + NADP(+) = (6R)-5,10-methenyltetrahydrofolate + NADPH. The enzyme catalyses (6R)-5,10-methenyltetrahydrofolate + H2O = (6R)-10-formyltetrahydrofolate + H(+). The protein operates within one-carbon metabolism; tetrahydrofolate interconversion. Functionally, catalyzes the oxidation of 5,10-methylenetetrahydrofolate to 5,10-methenyltetrahydrofolate and then the hydrolysis of 5,10-methenyltetrahydrofolate to 10-formyltetrahydrofolate. This chain is Bifunctional protein FolD, found in Sinorhizobium fredii (strain NBRC 101917 / NGR234).